Here is a 39-residue protein sequence, read N- to C-terminus: Cytochrome b559 subunit beta (39 aa).

The chain crosses the membrane as a helical span at residues 14–30 (WLAIHGLAVPTVSFLGS). Residue His-18 coordinates heme.

Belongs to the PsbE/PsbF family. As to quaternary structure, heterodimer of an alpha subunit and a beta subunit. PSII is composed of 1 copy each of membrane proteins PsbA, PsbB, PsbC, PsbD, PsbE, PsbF, PsbH, PsbI, PsbJ, PsbK, PsbL, PsbM, PsbT, PsbX, PsbY, PsbZ, Psb30/Ycf12, at least 3 peripheral proteins of the oxygen-evolving complex and a large number of cofactors. It forms dimeric complexes. The cofactor is heme b.

It is found in the plastid. It localises to the chloroplast thylakoid membrane. In terms of biological role, this b-type cytochrome is tightly associated with the reaction center of photosystem II (PSII). PSII is a light-driven water:plastoquinone oxidoreductase that uses light energy to abstract electrons from H(2)O, generating O(2) and a proton gradient subsequently used for ATP formation. It consists of a core antenna complex that captures photons, and an electron transfer chain that converts photonic excitation into a charge separation. The protein is Cytochrome b559 subunit beta of Allium textile (Textile onion).